The chain runs to 369 residues: Flagellar P-ring protein (369 aa).

Positions 1 to 23 (MRIASFFTVLLTLLTLNIAPASA) are cleaved as a signal peptide.

This sequence belongs to the FlgI family. As to quaternary structure, the basal body constitutes a major portion of the flagellar organelle and consists of four rings (L,P,S, and M) mounted on a central rod.

Its subcellular location is the periplasm. The protein localises to the bacterial flagellum basal body. Assembles around the rod to form the L-ring and probably protects the motor/basal body from shearing forces during rotation. This is Flagellar P-ring protein from Pectobacterium carotovorum subsp. carotovorum (strain PC1).